Consider the following 883-residue polypeptide: Phosphoenolpyruvate carboxylase (883 aa).

Active-site residues include His-138 and Lys-546.

This sequence belongs to the PEPCase type 1 family. Mg(2+) is required as a cofactor.

The catalysed reaction is oxaloacetate + phosphate = phosphoenolpyruvate + hydrogencarbonate. Forms oxaloacetate, a four-carbon dicarboxylic acid source for the tricarboxylic acid cycle. The protein is Phosphoenolpyruvate carboxylase of Salmonella arizonae (strain ATCC BAA-731 / CDC346-86 / RSK2980).